Consider the following 193-residue polypeptide: Xanthine phosphoribosyltransferase (193 aa).

Xanthine contacts are provided by Leu-20 and Asn-27. 129–133 (ANGKA) contributes to the 5-phospho-alpha-D-ribose 1-diphosphate binding site. Lys-157 contacts xanthine.

Belongs to the purine/pyrimidine phosphoribosyltransferase family. Xpt subfamily. As to quaternary structure, homodimer.

Its subcellular location is the cytoplasm. It catalyses the reaction XMP + diphosphate = xanthine + 5-phospho-alpha-D-ribose 1-diphosphate. It participates in purine metabolism; XMP biosynthesis via salvage pathway; XMP from xanthine: step 1/1. Functionally, converts the preformed base xanthine, a product of nucleic acid breakdown, to xanthosine 5'-monophosphate (XMP), so it can be reused for RNA or DNA synthesis. This Bifidobacterium adolescentis (strain ATCC 15703 / DSM 20083 / NCTC 11814 / E194a) protein is Xanthine phosphoribosyltransferase.